The chain runs to 186 residues: Testis-expressed protein 29 (186 aa).

Residues 1 to 56 (MKDTKEIKRSPPHLLKKFAVCDIPLYDICDYNVTRERCRSLDCCFYRGVCYEKAVP) are Extracellular-facing. The helical transmembrane segment at 57–77 (IYVQVFFTLIWFVAGAFIIAV) threads the bilayer. Residues 78–151 (IYRVIQGTKK…AGCCLWMKSK (74 aa)) are Cytoplasmic-facing. 2 disordered regions span residues 104–138 (SPTP…KTES) and 151–186 (KPAK…QAAP). Residues 108-133 (ELIPEPIPEPIPEPIPEPIREPPPPV) show a composition bias toward pro residues.

The protein resides in the membrane. This is Testis-expressed protein 29 (Tex29) from Mus musculus (Mouse).